Reading from the N-terminus, the 334-residue chain is Ornithine carbamoyltransferase (334 aa).

Residues 56–59 (STRT), glutamine 83, arginine 107, and 134–137 (HPTQ) each bind carbamoyl phosphate. L-ornithine contacts are provided by residues asparagine 168, aspartate 232, and 236-237 (SM). Residues 274 to 275 (CL) and arginine 320 each bind carbamoyl phosphate.

It belongs to the aspartate/ornithine carbamoyltransferase superfamily. OTCase family.

The protein resides in the cytoplasm. The catalysed reaction is carbamoyl phosphate + L-ornithine = L-citrulline + phosphate + H(+). It functions in the pathway amino-acid biosynthesis; L-arginine biosynthesis; L-arginine from L-ornithine and carbamoyl phosphate: step 1/3. Its function is as follows. Reversibly catalyzes the transfer of the carbamoyl group from carbamoyl phosphate (CP) to the N(epsilon) atom of ornithine (ORN) to produce L-citrulline. The chain is Ornithine carbamoyltransferase from Shigella sonnei (strain Ss046).